Here is a 205-residue protein sequence, read N- to C-terminus: Holliday junction branch migration complex subunit RuvA (205 aa).

The domain I stretch occupies residues 1–63; it reads MIGMLRGHVE…QDAITLFGFG (63 aa). A domain II region spans residues 64-142; the sequence is TLASKRMFLQ…LSQIEGSSAT (79 aa). The segment at 143–145 is flexible linker; the sequence is AST. The domain III stretch occupies residues 146–205; the sequence is PEDTGAEQVVEGLMSLGWHQQDAAHAVQTVCADNQIETPLNAKDVPRVLKLALTSLDRGR.

The protein belongs to the RuvA family. As to quaternary structure, homotetramer. Forms an RuvA(8)-RuvB(12)-Holliday junction (HJ) complex. HJ DNA is sandwiched between 2 RuvA tetramers; dsDNA enters through RuvA and exits via RuvB. An RuvB hexamer assembles on each DNA strand where it exits the tetramer. Each RuvB hexamer is contacted by two RuvA subunits (via domain III) on 2 adjacent RuvB subunits; this complex drives branch migration. In the full resolvosome a probable DNA-RuvA(4)-RuvB(12)-RuvC(2) complex forms which resolves the HJ.

The protein resides in the cytoplasm. Functionally, the RuvA-RuvB-RuvC complex processes Holliday junction (HJ) DNA during genetic recombination and DNA repair, while the RuvA-RuvB complex plays an important role in the rescue of blocked DNA replication forks via replication fork reversal (RFR). RuvA specifically binds to HJ cruciform DNA, conferring on it an open structure. The RuvB hexamer acts as an ATP-dependent pump, pulling dsDNA into and through the RuvAB complex. HJ branch migration allows RuvC to scan DNA until it finds its consensus sequence, where it cleaves and resolves the cruciform DNA. In Bifidobacterium adolescentis (strain ATCC 15703 / DSM 20083 / NCTC 11814 / E194a), this protein is Holliday junction branch migration complex subunit RuvA.